A 190-amino-acid chain; its full sequence is MKRLISCLTIICALNASAAAETTSNPCSRWISFLKPVCQRIHQTWTEGHDDMYFSGYAWHNRYVYSNEKIKSYNETAWGGGLGKSLFDEKGNWHGLYAIAFLDSHRHLEPAVGYAYLKTASVNKDLKAGLGYSVLVTSRVDYDNVPIPGALPWAALFYKRITIAATYIPGSSREGHENGNVLYMLGKISL.

An N-terminal signal peptide occupies residues 1–18 (MKRLISCLTIICALNASA). Catalysis depends on residues histidine 60, aspartate 103, and serine 104.

It belongs to the lipid A palmitoyltransferase family. In terms of assembly, homodimer.

The protein resides in the cell outer membrane. It catalyses the reaction a lipid A + a 1,2-diacyl-sn-glycero-3-phosphocholine = a hepta-acyl lipid A + a 2-acyl-sn-glycero-3-phosphocholine. It carries out the reaction a lipid IVA + a 1,2-diacyl-sn-glycero-3-phosphocholine = a lipid IVB + a 2-acyl-sn-glycero-3-phosphocholine. The enzyme catalyses a lipid IIA + a 1,2-diacyl-sn-glycero-3-phosphocholine = a lipid IIB + a 2-acyl-sn-glycero-3-phosphocholine. Functionally, transfers a fatty acid residue from the sn-1 position of a phospholipid to the N-linked hydroxyfatty acid chain on the proximal unit of lipid A or its precursors. This Legionella pneumophila subsp. pneumophila (strain Philadelphia 1 / ATCC 33152 / DSM 7513) protein is Lipid A acyltransferase PagP.